The sequence spans 428 residues: Protein clpf-1 (428 aa).

ATP is bound by residues Glu16, Arg56, and Asp124–Thr129.

The protein belongs to the Clp1 family. Clp1 subfamily.

The protein resides in the nucleus. Its function is as follows. Required for endonucleolytic cleavage during polyadenylation-dependent pre-mRNA 3'-end formation. This Caenorhabditis elegans protein is Protein clpf-1.